We begin with the raw amino-acid sequence, 207 residues long: dITP/XTP pyrophosphatase (207 aa).

7–12 serves as a coordination point for substrate; it reads SNNAKK. Catalysis depends on D72, which acts as the Proton acceptor. D72 is a binding site for Mg(2+). Substrate contacts are provided by residues S73, 155 to 158, K183, and 188 to 189; these read FGYD and HR.

This sequence belongs to the HAM1 NTPase family. As to quaternary structure, homodimer. Requires Mg(2+) as cofactor.

It catalyses the reaction XTP + H2O = XMP + diphosphate + H(+). It carries out the reaction dITP + H2O = dIMP + diphosphate + H(+). The catalysed reaction is ITP + H2O = IMP + diphosphate + H(+). Its function is as follows. Pyrophosphatase that catalyzes the hydrolysis of nucleoside triphosphates to their monophosphate derivatives, with a high preference for the non-canonical purine nucleotides XTP (xanthosine triphosphate), dITP (deoxyinosine triphosphate) and ITP. Seems to function as a house-cleaning enzyme that removes non-canonical purine nucleotides from the nucleotide pool, thus preventing their incorporation into DNA/RNA and avoiding chromosomal lesions. In Corynebacterium diphtheriae (strain ATCC 700971 / NCTC 13129 / Biotype gravis), this protein is dITP/XTP pyrophosphatase.